The chain runs to 291 residues: Tetrahydromethanopterin:alpha-L-glutamate ligase (291 aa).

One can recognise an ATP-grasp domain in the interval 101 to 286 (SVFLELNNLP…IADKLLEKII (186 aa)). Residues Lys136, 175–187 (QEFIKPVRNEHRD), and Arg203 each bind ATP. Residues Asp247, Glu259, and Asn261 each coordinate Mg(2+). Mn(2+) contacts are provided by Asp247, Glu259, and Asn261.

Belongs to the RimK family. MptN subfamily. As to quaternary structure, homodimer. Mg(2+) serves as cofactor. Requires Mn(2+) as cofactor.

The enzyme catalyses 5,6,7,8-tetrahydromethanopterin + L-glutamate + ATP = 5,6,7,8-tetrahydrosarcinapterin + ADP + phosphate + H(+). It functions in the pathway cofactor biosynthesis; 5,6,7,8-tetrahydrosarcinapterin biosynthesis. Functionally, catalyzes the ATP or GTP-dependent addition of one L-glutamate molecule to tetrahydromethanopterin, producing tetrahydrosarcinapterin. The sequence is that of Tetrahydromethanopterin:alpha-L-glutamate ligase (mptN) from Methanocaldococcus jannaschii (strain ATCC 43067 / DSM 2661 / JAL-1 / JCM 10045 / NBRC 100440) (Methanococcus jannaschii).